Consider the following 138-residue polypeptide: ATP synthase epsilon chain (138 aa).

Belongs to the ATPase epsilon chain family. As to quaternary structure, F-type ATPases have 2 components, CF(1) - the catalytic core - and CF(0) - the membrane proton channel. CF(1) has five subunits: alpha(3), beta(3), gamma(1), delta(1), epsilon(1). CF(0) has three main subunits: a, b and c.

The protein localises to the cell inner membrane. Functionally, produces ATP from ADP in the presence of a proton gradient across the membrane. The chain is ATP synthase epsilon chain from Delftia acidovorans (strain DSM 14801 / SPH-1).